The following is a 264-amino-acid chain: Thymidylate synthase (264 aa).

Arginine 21 lines the dUMP pocket. (6R)-5,10-methylene-5,6,7,8-tetrahydrofolate is bound at residue histidine 51. Residue 126-127 coordinates dUMP; the sequence is RR. The active-site Nucleophile is the cysteine 146. DUMP is bound by residues 166-169, asparagine 177, and 207-209; these read RSCD and HLY. Aspartate 169 contributes to the (6R)-5,10-methylene-5,6,7,8-tetrahydrofolate binding site. Alanine 263 is a (6R)-5,10-methylene-5,6,7,8-tetrahydrofolate binding site.

Belongs to the thymidylate synthase family. Bacterial-type ThyA subfamily. In terms of assembly, homodimer.

The protein resides in the cytoplasm. It carries out the reaction dUMP + (6R)-5,10-methylene-5,6,7,8-tetrahydrofolate = 7,8-dihydrofolate + dTMP. It functions in the pathway pyrimidine metabolism; dTTP biosynthesis. Its function is as follows. Catalyzes the reductive methylation of 2'-deoxyuridine-5'-monophosphate (dUMP) to 2'-deoxythymidine-5'-monophosphate (dTMP) while utilizing 5,10-methylenetetrahydrofolate (mTHF) as the methyl donor and reductant in the reaction, yielding dihydrofolate (DHF) as a by-product. This enzymatic reaction provides an intracellular de novo source of dTMP, an essential precursor for DNA biosynthesis. The polypeptide is Thymidylate synthase (Shewanella baltica (strain OS155 / ATCC BAA-1091)).